Reading from the N-terminus, the 255-residue chain is Bouquet formation protein 3 (255 aa).

The next 8 helical transmembrane spans lie at 13–33 (IKVS…NYHL), 48–68 (IPYW…LLLQ), 72–94 (LGYG…YYLT), 99–116 (IAWA…ARCF), 132–152 (YSVS…LNYI), 172–192 (SLVA…GYVI), 205–225 (SLFL…SILF), and 235–255 (VVGA…ALSL).

It is found in the endoplasmic reticulum membrane. It localises to the nucleus inner membrane. In terms of biological role, connects telomeres to the nuclear envelop (NE) during both vegetative growth and meiosis. This connection ensures clustering of telomeres to the spindle pole body (SPB) when cells enter meiotic prophase. The sequence is that of Bouquet formation protein 3 (bqt3) from Schizosaccharomyces pombe (strain 972 / ATCC 24843) (Fission yeast).